The sequence spans 151 residues: Melatonin receptor type 1C (151 aa).

At 1–13 (CHSLRYDRLYSRR) the chain is on the cytoplasmic side. The chain crosses the membrane as a helical span at residues 14 to 34 (NTCLYLLLTWMLTALATVPNF). Over 35–58 (LVGSLKYDPRVFSCTFTQTASSSY) the chain is Extracellular. A helical membrane pass occupies residues 59 to 79 (TVCVVLIHFLVPLGVVSFCYL). The Cytoplasmic segment spans residues 80–109 (RIWTLVIRVKGRVRPNPKVRAADLRNFLTM). The chain crosses the membrane as a helical span at residues 110–130 (FVVFVLFAVCWAPLNFIGLAV). The Extracellular segment spans residues 131–143 (AINPAKVAPNIPE). The chain crosses the membrane as a helical span at residues 144–151 (WLFVTSYF).

Belongs to the G-protein coupled receptor 1 family.

It is found in the cell membrane. Functionally, high affinity receptor for melatonin. The activity of this receptor is mediated by pertussis toxin sensitive G proteins that inhibits adenylate cyclase activity. The sequence is that of Melatonin receptor type 1C (mtnr1c) from Danio rerio (Zebrafish).